Reading from the N-terminus, the 677-residue chain is Methionine--tRNA ligase (677 aa).

A 'HIGH' region motif is present at residues 15-25 (PYANGSIHLGH). Zn(2+)-binding residues include cysteine 146, cysteine 149, cysteine 159, and cysteine 162. The 'KMSKS' region signature appears at 333–337 (KMSKS). Residue lysine 336 participates in ATP binding. One can recognise a tRNA-binding domain in the interval 575–677 (DFAKVDLRVA…DGAKPGQQVK (103 aa)).

The protein belongs to the class-I aminoacyl-tRNA synthetase family. MetG type 1 subfamily. As to quaternary structure, homodimer. The cofactor is Zn(2+).

It is found in the cytoplasm. It carries out the reaction tRNA(Met) + L-methionine + ATP = L-methionyl-tRNA(Met) + AMP + diphosphate. Functionally, is required not only for elongation of protein synthesis but also for the initiation of all mRNA translation through initiator tRNA(fMet) aminoacylation. The chain is Methionine--tRNA ligase from Klebsiella pneumoniae subsp. pneumoniae (strain ATCC 700721 / MGH 78578).